Consider the following 211-residue polypeptide: Suppressor of RNA silencing p3 (211 aa).

It belongs to the tenuiviruses p3 protein family. As to quaternary structure, homodimer.

It is found in the host cytoplasm. Acts as a suppressor of RNA-mediated gene silencing, also known as post-transcriptional gene silencing (PTGS), presumably through the binding of dsRNA. This Avena sativa (Oat) protein is Suppressor of RNA silencing p3.